The sequence spans 718 residues: Polyribonucleotide nucleotidyltransferase (718 aa).

Residues Asp-497 and Asp-503 each contribute to the Mg(2+) site. Residues 564–623 form the KH domain; the sequence is PRLLTMKIDPEQIGLVIGPGGKTIKGITEQTGSKIDIADDGTVTIAALEAEKAEKAKQII. The S1 motif domain maps to 633–701; sequence GEVYMGRVTR…AKGRLNLTRL (69 aa).

Belongs to the polyribonucleotide nucleotidyltransferase family. Requires Mg(2+) as cofactor.

It localises to the cytoplasm. The catalysed reaction is RNA(n+1) + phosphate = RNA(n) + a ribonucleoside 5'-diphosphate. In terms of biological role, involved in mRNA degradation. Catalyzes the phosphorolysis of single-stranded polyribonucleotides processively in the 3'- to 5'-direction. This chain is Polyribonucleotide nucleotidyltransferase, found in Rippkaea orientalis (strain PCC 8801 / RF-1) (Cyanothece sp. (strain PCC 8801)).